Reading from the N-terminus, the 443-residue chain is EGF-containing fibulin-like extracellular matrix protein 2 (443 aa).

The N-terminal stretch at 1 to 25 (MLPFASCLPGSLLLWALLLLLLGAA) is a signal peptide. In terms of domain architecture, EGF-like 1; atypical spans 36–81 (YTECTDGYEWDADSQHCRDVNECLTIPEACKGEMKCINHYGGYLCL). Intrachain disulfides connect Cys-58-Cys-121, Cys-65-Cys-80, Cys-71-Cys-109, Cys-127-Cys-140, Cys-134-Cys-149, Cys-151-Cys-162, Cys-168-Cys-177, Cys-173-Cys-186, Cys-188-Cys-201, Cys-207-Cys-217, Cys-213-Cys-226, Cys-228-Cys-241, Cys-247-Cys-258, Cys-254-Cys-267, Cys-269-Cys-281, Cys-287-Cys-300, Cys-294-Cys-309, and Cys-315-Cys-327. Positions 123–163 (DVDECAQALHDCRPSQDCHNLPGSYQCTCPDGYRKVGPECV) constitute an EGF-like 2; calcium-binding domain. Residues 164-202 (DIDECRYRYCQHRCVNLPGSFRCQCEPGFQLGPNNRSCV) form the EGF-like 3; calcium-binding domain. Asn-198 carries an N-linked (GlcNAc...) asparagine glycan. The region spanning 203-242 (DVNECDMGAPCEQRCFNSYGTFLCRCNQGYELHRDGFSCS) is the EGF-like 4; calcium-binding domain. Residues 243-282 (DIDECSYSSYLCQYRCVNEPGRFSCHCPQGYQLLATRLCQ) form the EGF-like 5; calcium-binding domain. Positions 283-328 (DIDECETGAHQCSEAQTCVNFHGGYRCVDTNRCVEPYVQVSDNRCF) constitute an EGF-like 6; calcium-binding domain. The N-linked (GlcNAc...) asparagine glycan is linked to Asn-394.

This sequence belongs to the fibulin family. In terms of assembly, homodimer; disulfide-linked. Multimer; allows heparin binding. Monomer. Interacts with FBN1 (via N-terminal domain); this interaction inhibits EFEMP2 binding to LOX and ELN. Interacts with LOX (via propeptide); this interaction is strong and facilitates formation of ternary complexes with ELN during elastic fiber assembly; this interaction limits interaction of EFEMP2 with FBLN5. Interacts with PITX2. Interacts with ELN with moderate affinity; this interaction regulates ELN self-assembly maturation stage. Interacts with FBLN5 with moderate affinity. Interacts with LOXL1 (via propeptide), LTBP1 and TGFB1 stronger than with LOXL2 and LTBP3. Interacts with PCOLCE. Interacts with collagen type IV trimer (COL4A1-COL4A1-COL4A2), NID2 and moderately with COL15A1-derived endostatin. Interacts with EMILIN1; this interaction promotes the incorporation of EFEMP2 into the extracellular matrix. Interacts with LTBP4; the LTBP4 long form (LTBP4L) has a stronger binding affinity than the LTBP4 short form and the LTBP4 long form promotes fibrillar deposition of EFEMP2. Post-translationally, N-glycosylated; contains mostly complex-type glycans. Not O-glycosylated. Cleaved by ELANE; produces a 50-55 kDa fragment. Cleaved by MMP2 and MMP9; produces several fragments.

The protein localises to the secreted. It is found in the extracellular space. Its subcellular location is the extracellular matrix. It localises to the basement membrane. Its function is as follows. Plays a crucial role in elastic fiber formation in tissue, and in the formation of ultrastructural connections between elastic laminae and smooth muscle cells in the aorta, therefore participates in terminal differentiation and maturation of smooth muscle cell (SMC) and in the mechanical properties and wall integrity maintenance of the aorta. In addition, is involved in the control of collagen fibril assembly in tissue throught proteolytic activation of LOX leading to cross- linking of collagen and elastin. Also promotes ELN coacervation and participates in the deposition of ELN coacervates on to microfibrils but also regulates ELN cross- linking through LOX interaction. Moreover adheres to the cells through heparin binding in a calcium-dependent manner and regulates vascularlar smooth muscle cells proliferation through angiotensin signaling. This Cricetulus griseus (Chinese hamster) protein is EGF-containing fibulin-like extracellular matrix protein 2.